Consider the following 273-residue polypeptide: Glutamate racemase (273 aa).

Residues 17-18 (DS) and 49-50 (YG) contribute to the substrate site. Cysteine 80 serves as the catalytic Proton donor/acceptor. 81 to 82 (NT) is a substrate binding site. The active-site Proton donor/acceptor is cysteine 190. 191–192 (TH) lines the substrate pocket.

It belongs to the aspartate/glutamate racemases family.

It catalyses the reaction L-glutamate = D-glutamate. The protein operates within cell wall biogenesis; peptidoglycan biosynthesis. In terms of biological role, provides the (R)-glutamate required for cell wall biosynthesis. This is Glutamate racemase from Corynebacterium glutamicum (strain ATCC 13032 / DSM 20300 / JCM 1318 / BCRC 11384 / CCUG 27702 / LMG 3730 / NBRC 12168 / NCIMB 10025 / NRRL B-2784 / 534).